We begin with the raw amino-acid sequence, 692 residues long: Phenoloxidase subunit 2 (692 aa).

Residues 1 to 97 (MTDRVKSLQL…PRHQEMATEV (97 aa)) constitute a propeptide that is removed on maturation. Residues His-213, His-217, and His-243 each coordinate Cu cation. 3 N-linked (GlcNAc...) asparagine glycosylation sites follow: Asn-256, Asn-295, and Asn-309. Glu-351 acts as the Proton acceptor in catalysis. His-366, His-370, and His-406 together coordinate Cu cation. An N-linked (GlcNAc...) asparagine glycan is attached at Asn-494. Disulfide bonds link Cys-583-Cys-628 and Cys-585-Cys-635.

It belongs to the tyrosinase family. Heterodimer. Cu(2+) serves as cofactor.

Its subcellular location is the secreted. It catalyses the reaction L-tyrosine + O2 = L-dopaquinone + H2O. It carries out the reaction 2 L-dopa + O2 = 2 L-dopaquinone + 2 H2O. Copper-containing oxidase that functions in the formation of pigments such as melanins and other polyphenolic compounds. Catalyzes the rate-limiting conversions of tyrosine to DOPA, DOPA to DOPA-quinone and possibly 5,6 dihydroxyindole to indole-5'6 quinone. Binds to the surface of hemocytes and is involved in hemocyte melanization. Binds the A.niger cell wall component alpha-1,3-glucan, a fungal pathogen-associated molecular pattern (PAMP) that activates the host immune response. The chain is Phenoloxidase subunit 2 from Galleria mellonella (Greater wax moth).